A 226-amino-acid polypeptide reads, in one-letter code: Ribonuclease 3 (226 aa).

The RNase III domain maps to 2–129; it reads IETISKTIKY…LIGAIYLDGG (128 aa). E42 contributes to the Mg(2+) binding site. D46 is a catalytic residue. Mg(2+) is bound by residues N115 and E118. E118 is an active-site residue. Residues 154-223 form the DRBM domain; the sequence is DAKTILQEFI…ASLMLNQIKD (70 aa).

The protein belongs to the ribonuclease III family. In terms of assembly, homodimer. Mg(2+) serves as cofactor.

The protein resides in the cytoplasm. The catalysed reaction is Endonucleolytic cleavage to 5'-phosphomonoester.. Digests double-stranded RNA. Involved in the processing of primary rRNA transcript to yield the immediate precursors to the large and small rRNAs (23S and 16S). Processes some mRNAs, and tRNAs when they are encoded in the rRNA operon. Processes pre-crRNA and tracrRNA of type II CRISPR loci if present in the organism. The chain is Ribonuclease 3 from Ehrlichia canis (strain Jake).